A 173-amino-acid polypeptide reads, in one-letter code: Photosystem I assembly protein Ycf3 (173 aa).

TPR repeat units follow at residues 35 to 68 (AYVY…ETDP), 72 to 105 (GETL…NPKQ), and 120 to 153 (GRIA…NPGG).

The protein belongs to the Ycf3 family.

It is found in the cellular thylakoid membrane. Essential for the assembly of the photosystem I (PSI) complex. May act as a chaperone-like factor to guide the assembly of the PSI subunits. This chain is Photosystem I assembly protein Ycf3, found in Synechococcus sp. (strain CC9902).